The following is a 201-amino-acid chain: ATP-dependent Clp protease proteolytic subunit (201 aa).

Residue serine 101 is the Nucleophile of the active site. Histidine 126 is an active-site residue.

This sequence belongs to the peptidase S14 family. Component of the chloroplastic Clp protease core complex.

The protein localises to the plastid. It localises to the chloroplast stroma. The catalysed reaction is Hydrolysis of proteins to small peptides in the presence of ATP and magnesium. alpha-casein is the usual test substrate. In the absence of ATP, only oligopeptides shorter than five residues are hydrolyzed (such as succinyl-Leu-Tyr-|-NHMec, and Leu-Tyr-Leu-|-Tyr-Trp, in which cleavage of the -Tyr-|-Leu- and -Tyr-|-Trp bonds also occurs).. In terms of biological role, cleaves peptides in various proteins in a process that requires ATP hydrolysis. Has a chymotrypsin-like activity. Plays a major role in the degradation of misfolded proteins. This chain is ATP-dependent Clp protease proteolytic subunit, found in Chaetosphaeridium globosum (Charophycean green alga).